Here is a 456-residue protein sequence, read N- to C-terminus: 3-isopropylmalate dehydratase large subunit (456 aa).

3 residues coordinate [4Fe-4S] cluster: Cys336, Cys396, and Cys399.

The protein belongs to the aconitase/IPM isomerase family. LeuC type 1 subfamily. As to quaternary structure, heterodimer of LeuC and LeuD. The cofactor is [4Fe-4S] cluster.

It catalyses the reaction (2R,3S)-3-isopropylmalate = (2S)-2-isopropylmalate. It participates in amino-acid biosynthesis; L-leucine biosynthesis; L-leucine from 3-methyl-2-oxobutanoate: step 2/4. Its function is as follows. Catalyzes the isomerization between 2-isopropylmalate and 3-isopropylmalate, via the formation of 2-isopropylmaleate. This is 3-isopropylmalate dehydratase large subunit from Staphylococcus epidermidis (strain ATCC 35984 / DSM 28319 / BCRC 17069 / CCUG 31568 / BM 3577 / RP62A).